Reading from the N-terminus, the 227-residue chain is MLRILDRAEEVLIAALIATATVLIFVSVTHRFTLGFVADFVGFFRGHGMTGAAAAAKSLYTTLRGINLVWAQELCIILFVWMAKFGAAYGVRTGIHVGIDVLINRLDAPKRRFFILLGLGAGALFTGIIATLGANFVLHMYHASSTSPDLELPMWLVYLAIPMGSSLMCFRFLQVAFGFARTGELPHHDHGHVDGVDTENEGIDAEGDVLLHSPLTPRDLVEKPKDN.

The Cytoplasmic portion of the chain corresponds to 1–7; sequence MLRILDR. A helical membrane pass occupies residues 8–28; that stretch reads AEEVLIAALIATATVLIFVSV. At 29-67 the chain is on the periplasmic side; that stretch reads THRFTLGFVADFVGFFRGHGMTGAAAAAKSLYTTLRGIN. Residues 68–88 form a helical membrane-spanning segment; it reads LVWAQELCIILFVWMAKFGAA. Over 89–112 the chain is Cytoplasmic; it reads YGVRTGIHVGIDVLINRLDAPKRR. Residues 113–133 form a helical membrane-spanning segment; sequence FFILLGLGAGALFTGIIATLG. Residues 134–149 lie on the Periplasmic side of the membrane; the sequence is ANFVLHMYHASSTSPD. The chain crosses the membrane as a helical span at residues 150 to 170; sequence LELPMWLVYLAIPMGSSLMCF. At 171–227 the chain is on the cytoplasmic side; it reads RFLQVAFGFARTGELPHHDHGHVDGVDTENEGIDAEGDVLLHSPLTPRDLVEKPKDN.

This sequence belongs to the TRAP transporter small permease family. As to quaternary structure, the complex comprises the extracytoplasmic solute receptor protein DctP, and the two transmembrane proteins DctQ and DctM.

The protein resides in the cell inner membrane. Its function is as follows. Part of the tripartite ATP-independent periplasmic (TRAP) transport system DctPQM involved in C4-dicarboxylates uptake. The polypeptide is C4-dicarboxylate TRAP transporter small permease protein DctQ (Rhodobacter capsulatus (Rhodopseudomonas capsulata)).